The sequence spans 824 residues: Leucine--tRNA ligase (824 aa).

The 'HIGH' region motif lies at 42–52; sequence PYPSGRIHMGH. Residues 581 to 585 carry the 'KMSKS' region motif; it reads KMSKS. K584 provides a ligand contact to ATP.

This sequence belongs to the class-I aminoacyl-tRNA synthetase family.

The protein localises to the cytoplasm. It catalyses the reaction tRNA(Leu) + L-leucine + ATP = L-leucyl-tRNA(Leu) + AMP + diphosphate. In Geotalea uraniireducens (strain Rf4) (Geobacter uraniireducens), this protein is Leucine--tRNA ligase.